The chain runs to 180 residues: MSRVGKLPVAIPNGVTVTVTPDNVVTVKGPKGELAKAMSNKINIAVEDNSVVVTRDNDHKDVRALHGLTRALINNMVTGVNEGYVKTLELVGVGYRAQLQGKKLVLSLGFSHPVEMEAVSGVEFEVEGGTKVKVKGIDKELVGAVAADIRKWRKPEPYKGKGIKYENEVIRRKEGKTGKK.

The protein belongs to the universal ribosomal protein uL6 family. Part of the 50S ribosomal subunit.

Functionally, this protein binds to the 23S rRNA, and is important in its secondary structure. It is located near the subunit interface in the base of the L7/L12 stalk, and near the tRNA binding site of the peptidyltransferase center. The protein is Large ribosomal subunit protein uL6 of Clostridium botulinum (strain Langeland / NCTC 10281 / Type F).